Here is a 310-residue protein sequence, read N- to C-terminus: Isoflavone reductase homolog A622-like (310 aa).

NADP(+) contacts are provided by residues 13 to 19, Arg38, and Lys47; that span reads GGTGYIG. Lys135 acts as the Proton acceptor in catalysis. Arg139 contributes to the NADP(+) binding site.

This sequence belongs to the NmrA-type oxidoreductase family. Isoflavone reductase subfamily. Monomer. Expressed in roots.

It is found in the cytoplasm. It functions in the pathway alkaloid biosynthesis; nicotine biosynthesis. Its function is as follows. Involved in the biosynthesis of pyridine alkaloid natural products, leading mainly to the production of anabasine, anatabine, nicotine and nornicotine, effective deterrents against herbivores with antiparasitic and pesticide properties (neurotoxins); nornicotine serves as the precursor in the synthesis of the carcinogen compound N'-nitrosonornicotine (NNN). Reductase that may be involved in a late step of tobacco alkaloid biosynthesis. Maybe involved in either the formation of a nicotinic acid-derived precursor or the final condensation reaction of tobacco alkaloids. The polypeptide is Isoflavone reductase homolog A622-like (Nicotiana tabacum (Common tobacco)).